A 378-amino-acid polypeptide reads, in one-letter code: 1-acyl-sn-glycerol-3-phosphate acyltransferase delta (378 aa).

A helical membrane pass occupies residues 11–31 (FLCHLVFCYVFIASGLIINTI). Residues 96–101 (HKFEID) carry the HXXXXD motif motif. A run of 3 helical transmembrane segments spans residues 125–145 (ELAY…VFCS), 307–327 (TLVN…QFLV), and 338–358 (LASF…MIGV).

Belongs to the 1-acyl-sn-glycerol-3-phosphate acyltransferase family.

The protein resides in the endoplasmic reticulum membrane. The enzyme catalyses a 1-acyl-sn-glycero-3-phosphate + an acyl-CoA = a 1,2-diacyl-sn-glycero-3-phosphate + CoA. It catalyses the reaction (4Z,7Z,10Z,13Z,16Z,19Z)-docosahexaenoyl-CoA + 1-hexadecanoyl-sn-glycero-3-phosphate = 1-hexadecanoyl-2-(4Z,7Z,10Z,13Z,16Z,19Z-docosahexaenoyl)-sn-glycero-3-phosphate + CoA. The catalysed reaction is 1-octadecanoyl-sn-glycero-3-phosphate + (9Z,12Z)-octadecadienoyl-CoA = 1-octadecanoyl-2-(9Z,12Z-octadecadienoyl)-sn-glycero-3-phosphate + CoA. It carries out the reaction 1-octadecanoyl-sn-glycero-3-phosphate + (4Z,7Z,10Z,13Z,16Z,19Z)-docosahexaenoyl-CoA = 1-octadecanoyl-2-(4Z,7Z,10Z,13Z,16Z,19Z-docosahexaenoyl)-sn-glycero-3-phosphate + CoA. The enzyme catalyses (4Z,7Z,10Z,13Z,16Z,19Z)-docosahexaenoyl-CoA + 1-(9Z-octadecenoyl)-sn-glycero-3-phosphate = 1-(9Z-octadecenoyl)-2-(4Z,7Z,10Z,13Z,16Z,19Z-docosahexaenoyl)-sn-glycero-3-phosphate + CoA. Its pathway is phospholipid metabolism; CDP-diacylglycerol biosynthesis; CDP-diacylglycerol from sn-glycerol 3-phosphate: step 2/3. Its function is as follows. Converts 1-acyl-sn-glycerol-3-phosphate (lysophosphatidic acid or LPA) into 1,2-diacyl-sn-glycerol-3-phosphate (phosphatidic acid or PA) by incorporating an acyl moiety at the sn-2 position of the glycerol backbone. Exhibits high acyl-CoA specificity for polyunsaturated fatty acyl-CoA, especially docosahexaenoyl-CoA (22:6-CoA, DHA-CoA). This chain is 1-acyl-sn-glycerol-3-phosphate acyltransferase delta (AGPAT4), found in Pongo abelii (Sumatran orangutan).